The following is a 137-amino-acid chain: MIAVKKDKINGDALGTGRRKSSVARVRVRPGSGKITINGKSIEEYFVNDQHRYAITETLEAAGLTESVDLLIRVSGGGMTGQAGAVRMGLARALCSHDEALHDPMREGSFLTRDSRMKERKKPGLRGARRGVQFSKR.

The segment at 114-137 (DSRMKERKKPGLRGARRGVQFSKR) is disordered. Basic residues predominate over residues 118–137 (KERKKPGLRGARRGVQFSKR).

This sequence belongs to the universal ribosomal protein uS9 family.

The sequence is that of Small ribosomal subunit protein uS9 from Rhodopirellula baltica (strain DSM 10527 / NCIMB 13988 / SH1).